The following is a 1418-amino-acid chain: Sterol 3-beta-glucosyltransferase (1418 aa).

Residues 1–16 are compositionally biased toward basic and acidic residues; sequence MRPFLDDAKRRVDRKL. 3 disordered regions span residues 1–59, 83–188, and 207–233; these read MRPF…SREG, ARFD…RSAT, and LKASSTERSQPSLDESGEKGPRGASVS. Polar residues predominate over residues 18-28; that stretch reads ASRQSLSTSRL. 2 stretches are compositionally biased toward basic and acidic residues: residues 35–44 and 95–105; these read DRLKDNHDAQ and SEQRPRKESSV. Residues 106 to 115 show a composition bias toward polar residues; sequence RKGTSASANT. Over residues 116–126 the composition is skewed to low complexity; the sequence is SSPLDSSQRSS. Basic and acidic residues-rich tracts occupy residues 127–139 and 147–166; these read SRTDGKSEKESGT and TISDHKLFRPFESNSKHEPQ. Residues 209-219 are compositionally biased toward polar residues; sequence ASSTERSQPSL. The 40-residue stretch at 249-288 folds into the GRAM 1 domain; the sequence is EKVLVEYACSLLQSILLQGYMYVTEGHICFYAYLPKKSTV. The region spanning 289 to 387 is the PH domain; the sequence is AIKSGYLYKR…WVKALQKVIF (99 aa). The segment at 462-651 is disordered; that stretch reads ISSQHLSPQP…DPTKSFSGAP (190 aa). Over residues 486 to 497 the composition is skewed to polar residues; sequence RWSLTSGTSRVL. The segment covering 508 to 519 has biased composition (low complexity); it reads ASASTSHTSLAH. Residues 534-575 are compositionally biased toward polar residues; sequence SESILNSFEQGTESSAAWQSMTDAAESASQILNRSDVFQSPT. Positions 578-598 are enriched in basic and acidic residues; that stretch reads GLDRRPSGGERRGRRNSDETA. The span at 599-612 shows a compositional bias: polar residues; that stretch reads RSLSTRANVGTGQQ. Over residues 615–633 the composition is skewed to basic and acidic residues; sequence ELGRRMDGDTSGREARDST. Positions 635–651 are enriched in polar residues; it reads ESDQYTQDPTKSFSGAP. Positions 733-799 constitute a GRAM 2 domain; that stretch reads DRFRAHFALP…RDIENVEKEK (67 aa). The UDP-alpha-D-glucose site is built by Ser-920, Arg-921, Asp-923, Ala-1223, His-1225, His-1238, Gly-1242, Thr-1243, Asp-1262, and Gln-1263. The interval 1339-1418 is disordered; that stretch reads SIASSTPFSP…SGPGRKLSGR (80 aa). Positions 1341 to 1355 are enriched in low complexity; that stretch reads ASSTPFSPTPSAKTT. Residues 1358–1379 are compositionally biased toward acidic residues; sequence QDADDDVEDSEEWTFVGDDTDM. A compositionally biased stretch (basic and acidic residues) spans 1380 to 1391; that stretch reads EMSRRLRDRAIS.

This sequence belongs to the glycosyltransferase 28 family.

It is found in the cytoplasm. The protein localises to the preautophagosomal structure membrane. It carries out the reaction a sterol + UDP-alpha-D-glucose = a sterol 3-beta-D-glucoside + UDP + H(+). The enzyme catalyses ergosterol + UDP-alpha-D-glucose = ergosteryl 3-beta-D-glucoside + UDP + H(+). Functionally, sterol glycosyltransferase responsible for the glycosylation of ergosterol to form ergosterol-glucoside. In Neosartorya fischeri (strain ATCC 1020 / DSM 3700 / CBS 544.65 / FGSC A1164 / JCM 1740 / NRRL 181 / WB 181) (Aspergillus fischerianus), this protein is Sterol 3-beta-glucosyltransferase.